The chain runs to 245 residues: Eukaryotic translation initiation factor 4E type 2 (245 aa).

The segment covering 1–38 (MNNKFDALKDDDSGDHDQNEENSTQKDGEKEKTERDKN) has biased composition (basic and acidic residues). Residues 1–52 (MNNKFDALKDDDSGDHDQNEENSTQKDGEKEKTERDKNQSSSKRKAVVPGPA) form a disordered region. At serine 13 the chain carries Phosphoserine. The tract at residues 54-57 (HPLQ) is EIF4EBP1/2/3 binding. 78 to 79 (YE) contributes to the mRNA binding site. Residues 95–99 (WRFYS) are EIF4EBP1/2/3 binding. Residues histidine 110 and 124 to 125 (WE) contribute to the mRNA site. Position 134 is an N6-acetyllysine; alternate (lysine 134). Residue lysine 134 forms a Glycyl lysine isopeptide (Lys-Gly) (interchain with G-Cter in ISG15); alternate linkage. The tract at residues 150–157 (NLILAMLG) is EIF4EBP1/2/3 binding. Residues 174–179 (RFQEDI) and 222–224 (KMP) each bind mRNA. A Glycyl lysine isopeptide (Lys-Gly) (interchain with G-Cter in ISG15) cross-link involves residue lysine 222.

The protein belongs to the eukaryotic initiation factor 4E family. As to quaternary structure, interacts with EIF4EBP1, EIF4EBP2 and EIF4EBP3. Does not interact with eIF4G (EIF4G1, EIF4G2 or EIF4G3). Component of the 4EHP-GYF2 complex, at least composed of EIF4E2, GIGYF2 and ZNF598. Interacts with GIGYF2 (via the 4EHP-binding motif); the interaction is direct. Interacts with EIF4ENIF1/4E-T (via YXXXXLphi motif); increasing affinity for the 7-methylguanosine-containing mRNA cap. In terms of processing, ubiquitinated by ARIH1. The consequences of ubiquitination are however unclear: according to a report, EIF4E2 ubiquitination leads to promote EIF4E2 cap-binding and protein translation arrest. According to another report ubiquitination leads to its subsequent degradation. Post-translationally, ISGylation enhances its cap structure-binding activity and translation-inhibition activity.

The protein localises to the cytoplasm. It localises to the P-body. In terms of biological role, recognizes and binds the 7-methylguanosine-containing mRNA cap during an early step in the initiation. Acts as a repressor of translation initiation. In contrast to EIF4E, it is unable to bind eIF4G (EIF4G1, EIF4G2 or EIF4G3), suggesting that it acts by competing with EIF4E and block assembly of eIF4F at the cap. In P-bodies, component of a complex that promotes miRNA-mediated translational repression. Involved in virus-induced host response by mediating miRNA MIR34A-induced translational silencing which controls IFNB1 production by a negative feedback mechanism. Its function is as follows. Component of the 4EHP-GYF2 complex, a multiprotein complex that acts as a repressor of translation initiation. In association with GIGYF2, assists ribosome-associated quality control (RQC) by sequestering the mRNA cap, blocking ribosome initiation and decreasing the translational load on problematic messages. Part of a pathway that works in parallel to RQC-mediated degradation of the stalled nascent polypeptide. GIGYF2 and EIF4E2 work downstream and independently of ZNF598, which seems to work as a scaffold that can recruit them to faulty mRNA even if alternative recruitment mechanisms may exist. (Microbial infection) Upon SARS coronavirus-2/SARS-CoV-2 infection, the interaction with non-structural protein 2 (nsp2) with GIGYF2 enhances GIGYF2 binding to EIF4E2 and increases repression of translation initiation of genes involved in antiviral innate immune response such as IFNB1. The protein is Eukaryotic translation initiation factor 4E type 2 of Homo sapiens (Human).